The primary structure comprises 334 residues: HTH-type transcriptional regulator RegA (334 aa).

Residues 1 to 57 (MAASIKDVAREARVSIATVSRVLNNVDVVNEETKKKVMEAIKKLDYRPNIVARSLKT) form the HTH lacI-type domain. The H-T-H motif DNA-binding region spans 5 to 24 (IKDVAREARVSIATVSRVLN).

Involved in the regulation of amylase production. This chain is HTH-type transcriptional regulator RegA (regA), found in Clostridium acetobutylicum (strain ATCC 824 / DSM 792 / JCM 1419 / IAM 19013 / LMG 5710 / NBRC 13948 / NRRL B-527 / VKM B-1787 / 2291 / W).